We begin with the raw amino-acid sequence, 325 residues long: SAM pointed domain-containing Ets transcription factor (325 aa).

2 disordered regions span residues 27-50 and 79-100; these read GTEKAASGAMGPEKQEWSPSPPAT and ARAGEDHPEEPEQCPVIDSQAS. One can recognise a PNT domain in the interval 119–203; that stretch reads EVLKDIETAC…AHLDIWKSAA (85 aa). A DNA-binding region (ETS) is located at residues 239-322; sequence IHLWQFLKEL…ISQRLVYQFV (84 aa).

The protein belongs to the ETS family. As to quaternary structure, interacts with the DNA-binding domain of the androgen receptor. Interacts with NKX3-1. As to expression, expressed in the accessory glands of sex organs including the prostate, seminal vesicle, coagulating gland in males, the oviduct in females, and in intestines. Expression is epithelial-specific.

Its subcellular location is the nucleus. Functionally, may function as an androgen-independent transactivator of the prostate-specific antigen (PSA) promoter. Binds to 5'-GGAT-3' DNA sequences. May play a role in the regulation of the prostate gland and/or prostate cancer development. Acts as a transcriptional activator for SERPINB5 promoter. This chain is SAM pointed domain-containing Ets transcription factor (Spdef), found in Mus musculus (Mouse).